The sequence spans 97 residues: Small ribosomal subunit protein bS20c (97 aa).

Over residues 1–15 (MSKNVSAIKKNQVSL) the composition is skewed to polar residues. The tract at residues 1 to 20 (MSKNVSAIKKNQVSLRNKRK) is disordered.

The protein belongs to the bacterial ribosomal protein bS20 family.

Its subcellular location is the plastid. It localises to the chloroplast. Its function is as follows. Binds directly to 16S ribosomal RNA. The protein is Small ribosomal subunit protein bS20c of Gracilaria tenuistipitata var. liui (Red alga).